Reading from the N-terminus, the 483-residue chain is Aspartyl/glutamyl-tRNA(Asn/Gln) amidotransferase subunit B (483 aa).

The protein belongs to the GatB/GatE family. GatB subfamily. As to quaternary structure, heterotrimer of A, B and C subunits.

The enzyme catalyses L-glutamyl-tRNA(Gln) + L-glutamine + ATP + H2O = L-glutaminyl-tRNA(Gln) + L-glutamate + ADP + phosphate + H(+). It carries out the reaction L-aspartyl-tRNA(Asn) + L-glutamine + ATP + H2O = L-asparaginyl-tRNA(Asn) + L-glutamate + ADP + phosphate + 2 H(+). Allows the formation of correctly charged Asn-tRNA(Asn) or Gln-tRNA(Gln) through the transamidation of misacylated Asp-tRNA(Asn) or Glu-tRNA(Gln) in organisms which lack either or both of asparaginyl-tRNA or glutaminyl-tRNA synthetases. The reaction takes place in the presence of glutamine and ATP through an activated phospho-Asp-tRNA(Asn) or phospho-Glu-tRNA(Gln). This chain is Aspartyl/glutamyl-tRNA(Asn/Gln) amidotransferase subunit B, found in Herpetosiphon aurantiacus (strain ATCC 23779 / DSM 785 / 114-95).